The primary structure comprises 161 residues: Large ribosomal subunit protein uL16 (161 aa).

The tract at residues 140-161 (LNKGNYKPAKTPVTADDSESSS) is disordered.

The protein belongs to the universal ribosomal protein uL16 family. Part of the 50S ribosomal subunit.

Its function is as follows. Binds 23S rRNA and is also seen to make contacts with the A and possibly P site tRNAs. In Prochlorococcus marinus (strain NATL1A), this protein is Large ribosomal subunit protein uL16.